The chain runs to 936 residues: Protein translocase subunit SecA (936 aa).

ATP is bound by residues glutamine 87, 105-109, and aspartate 515; that span reads GEGKT. Positions 920, 922, 931, and 932 each coordinate Zn(2+).

It belongs to the SecA family. As to quaternary structure, monomer and homodimer. Part of the essential Sec protein translocation apparatus which comprises SecA, SecYEG and auxiliary proteins SecDF-YajC and YidC. Zn(2+) serves as cofactor.

It is found in the cell inner membrane. The protein resides in the cytoplasm. The enzyme catalyses ATP + H2O + cellular proteinSide 1 = ADP + phosphate + cellular proteinSide 2.. Part of the Sec protein translocase complex. Interacts with the SecYEG preprotein conducting channel. Has a central role in coupling the hydrolysis of ATP to the transfer of proteins into and across the cell membrane, serving both as a receptor for the preprotein-SecB complex and as an ATP-driven molecular motor driving the stepwise translocation of polypeptide chains across the membrane. In Paraburkholderia phytofirmans (strain DSM 17436 / LMG 22146 / PsJN) (Burkholderia phytofirmans), this protein is Protein translocase subunit SecA.